Here is a 425-residue protein sequence, read N- to C-terminus: Enolase (425 aa).

Residue Gln163 participates in (2R)-2-phosphoglycerate binding. Glu205 acts as the Proton donor in catalysis. Residues Asp242, Glu285, and Asp312 each coordinate Mg(2+). Lys337, Arg366, Ser367, and Lys388 together coordinate (2R)-2-phosphoglycerate. The active-site Proton acceptor is the Lys337.

The protein belongs to the enolase family. Requires Mg(2+) as cofactor.

Its subcellular location is the cytoplasm. The protein resides in the secreted. It is found in the cell surface. It carries out the reaction (2R)-2-phosphoglycerate = phosphoenolpyruvate + H2O. It participates in carbohydrate degradation; glycolysis; pyruvate from D-glyceraldehyde 3-phosphate: step 4/5. Catalyzes the reversible conversion of 2-phosphoglycerate (2-PG) into phosphoenolpyruvate (PEP). It is essential for the degradation of carbohydrates via glycolysis. This is Enolase from Syntrophomonas wolfei subsp. wolfei (strain DSM 2245B / Goettingen).